The primary structure comprises 131 residues: Small ribosomal subunit protein uS11 (131 aa).

The protein belongs to the universal ribosomal protein uS11 family. Part of the 30S ribosomal subunit. Interacts with proteins S7 and S18. Binds to IF-3.

Its function is as follows. Located on the platform of the 30S subunit, it bridges several disparate RNA helices of the 16S rRNA. Forms part of the Shine-Dalgarno cleft in the 70S ribosome. The sequence is that of Small ribosomal subunit protein uS11 from Pelobacter propionicus (strain DSM 2379 / NBRC 103807 / OttBd1).